Here is a 156-residue protein sequence, read N- to C-terminus: Arginine repressor (156 aa).

Belongs to the ArgR family.

The protein resides in the cytoplasm. Its pathway is amino-acid biosynthesis; L-arginine biosynthesis [regulation]. Regulates arginine biosynthesis genes. The polypeptide is Arginine repressor (Erwinia tasmaniensis (strain DSM 17950 / CFBP 7177 / CIP 109463 / NCPPB 4357 / Et1/99)).